The following is a 574-amino-acid chain: Transmembrane glycoprotein NMB (574 aa).

The first 22 residues, 1–22 (MESLCGVLGFLLLAAGLPLQAA), serve as a signal peptide directing secretion. The Extracellular segment spans residues 23-502 (KRFRDVLGHE…DPDSPLRAVN (480 aa)). N-linked (GlcNAc...) asparagine glycosylation is found at Asn-93, Asn-134, Asn-200, Asn-249, Asn-275, Asn-296, Asn-300, Asn-306, and Asn-312. The 89-residue stretch at 250–338 (LSDEIFLRDL…STPPPPSTPP (89 aa)) folds into the PKD domain. Residues 320 to 353 (PGPCPPPSPSTPPPPSTPPSPPPSPLPTLSTPSP) are disordered. A compositionally biased stretch (pro residues) spans 321–345 (GPCPPPSPSTPPPPSTPPSPPPSPL). N-linked (GlcNAc...) asparagine glycans are attached at residues Asn-463 and Asn-471. Residues 503–523 (GVLISIGCLAVLVTMVTILLY) traverse the membrane as a helical segment. Topologically, residues 524–574 (KKHKAYKPIGNCPRNTVKGKGLSVLLSHAKAPFFRGDQEKDPLLQDKPRTL) are cytoplasmic. Ser-546 is modified (phosphoserine). A Cell attachment site motif is present at residues 558–560 (RGD).

This sequence belongs to the PMEL/NMB family. In terms of tissue distribution, may be up-regulated in bone metastatic breast cancer cells.

Its subcellular location is the cell membrane. The protein localises to the melanosome membrane. It localises to the early endosome membrane. In terms of biological role, could be a melanogenic enzyme. In Mus musculus (Mouse), this protein is Transmembrane glycoprotein NMB (Gpnmb).